The following is a 218-amino-acid chain: Ras-related protein RABA5e (218 aa).

A GTP-binding site is contributed by 19–26 (GDSAVGKS). The short motif at 41 to 49 (SKATIGVEF) is the Effector region element. GTP-binding positions include 67 to 71 (DTAGQ), 125 to 128 (NKCD), and 155 to 156 (SA). 2 S-geranylgeranyl cysteine lipidation sites follow: Cys214 and Cys215. Cys215 carries the post-translational modification Cysteine methyl ester. A propeptide spans 216–218 (SST) (removed in mature form).

Belongs to the small GTPase superfamily. Rab family.

It localises to the cell membrane. Its function is as follows. Intracellular vesicle trafficking and protein transport. The sequence is that of Ras-related protein RABA5e (RABA5E) from Arabidopsis thaliana (Mouse-ear cress).